The chain runs to 91 residues: Acylphosphatase (91 aa).

The Acylphosphatase-like domain maps to 3-91 (CLRAIVKGKV…ANYSDFRIKH (89 aa)). Catalysis depends on residues Arg18 and Asn36.

The protein belongs to the acylphosphatase family.

The enzyme catalyses an acyl phosphate + H2O = a carboxylate + phosphate + H(+). This Dehalococcoides mccartyi (strain CBDB1) protein is Acylphosphatase (acyP).